The sequence spans 310 residues: Homeobox protein knotted-1-like 2 (310 aa).

The segment at 178–208 (SDDGAVSSDEELREDDDIAADDSQQRSNDRD) is disordered. Positions 185–197 (SDEELREDDDIAA) are enriched in acidic residues. An ELK domain is found at 208-228 (DLKDQLLRKFGSHISSLKLEF). The segment at residues 229-292 (SKKKKKGKLP…NQRKRHWKPS (64 aa)) is a DNA-binding region (homeobox; TALE-type).

This sequence belongs to the TALE/KNOX homeobox family. May form heterodimeric complex with the TALE/BELL protein BEL1, BLH1 and BLH2. Interacts with OFP12 and OFP14. Interacts with BZIP30. As to expression, expressed predominantly in shoot apices of seedlings, in the receptacle and developing pistil of flowers and in axillary buds of inflorescence stems.

The protein resides in the nucleus. Functionally, may play a role in meristem function, and may be involved in maintaining cells in an undifferentiated, meristematic state. Probably binds to the DNA sequence 5'-TGAC-3'. This Arabidopsis thaliana (Mouse-ear cress) protein is Homeobox protein knotted-1-like 2 (KNAT2).